The chain runs to 804 residues: Cyclic di-GMP-binding protein (804 aa).

An N-terminal signal peptide occupies residues 1–18 (MKMVSLIALLVFATGAQA). Topologically, residues 19 to 766 (APIASKAPAH…DWYMHNHPFR (748 aa)) are periplasmic. The segment at 24–69 (KAPAHQPTGSDLPPLPAAAPVAPAAQPSAQAVDPASAAPASDAGSA) is disordered. The helical transmembrane segment at 767 to 787 (VIVVGLVGCLLVVAVLVRALF) threads the bilayer. The Cytoplasmic portion of the chain corresponds to 788 to 804 (RHAMFRRRQLQEERQKS).

It belongs to the AcsB/BcsB family. In terms of assembly, tightly associated with the cellulose synthase catalytic subunit.

The protein resides in the cell inner membrane. It functions in the pathway glycan metabolism; bacterial cellulose biosynthesis. In terms of biological role, binds the cellulose synthase activator, bis-(3'-5') cyclic diguanylic acid (c-di-GMP). The sequence is that of Cyclic di-GMP-binding protein (bcsBI) from Komagataeibacter xylinus (Gluconacetobacter xylinus).